The primary structure comprises 101 residues: RNA-binding protein Hfq (101 aa).

Positions 9-68 constitute a Sm domain; that stretch reads DPFLNALRRERVPVSIYLVNGIKLQGQVESFDQFVILLKNTVSQMVYKHAISTVVPSRPV. The tract at residues 63–101 is disordered; the sequence is VPSRPVSHHSNTPSGSTNNYHGSNPSAPQQPQQDSDDAE. Polar residues predominate over residues 70 to 86; the sequence is HHSNTPSGSTNNYHGSN.

Belongs to the Hfq family. In terms of assembly, homohexamer.

RNA chaperone that binds small regulatory RNA (sRNAs) and mRNAs to facilitate mRNA translational regulation in response to envelope stress, environmental stress and changes in metabolite concentrations. Also binds with high specificity to tRNAs. The chain is RNA-binding protein Hfq from Yersinia pseudotuberculosis serotype O:1b (strain IP 31758).